Consider the following 102-residue polypeptide: Gastrin/cholecystokinin-like peptide (102 aa).

The first 20 residues, 1–20, serve as a signal peptide directing secretion; it reads MDKKVCVSILLAMLAIAALC. Positions 21 to 45 are excised as a propeptide; that stretch reads RPMTELESARHGAQRKNSISDVSRR. Position 86 is a sulfotyrosine (tyrosine 86). Phenylalanine 92 is modified (phenylalanine amide). Positions 96–102 are excised as a propeptide; that stretch reads SSEVTES.

The protein belongs to the gastrin/cholecystokinin family. As to expression, expressed in antrum, duodenum, colon, pancreas, brain and testis. No expression found in kidney, lung, liver, skin or distal two-thirds of small intestine. In the brain, strongly expressed in the pituitary gland with moderate expression in the neural lobe, brain stem and hypothalamus.

Its subcellular location is the secreted. May control digestion processes. This is Gastrin/cholecystokinin-like peptide (GAST) from Aquarana catesbeiana (American bullfrog).